A 300-amino-acid chain; its full sequence is MKVIKTLSIINFFIFVTFNIKNESKYSNTFINNAYNMSIRRSMEESKPPTGAVAGSGAGAGSGAGAVAGSGAGAVAGSGAGAVAGSGAGAVAGSGAGAVAGSGAVAGSGAGNGANPGADAERSPSTPATTTTTTTTNDAEASTSTSSENRNHNNAETNPKGKGEVQKPNQANKETQNNSNVQQDSQTKSNVPRTQDADTKSPTAQPEQAENSAPTAEQTESPELQSAPENKGTGQHGHMHGSRNNHPQNTSDSQKECTDGNKENCGAATSLLNNSSNIASINKFVVLISATLVLSFAIFI.

An N-terminal signal peptide occupies residues 1 to 20; sequence MKVIKTLSIINFFIFVTFNI. Asn22 and Asn36 each carry an N-linked (GlcNAc...) asparagine glycan. The tract at residues 44 to 226 is polymorphic region; sequence EESKPPTGAV…EQTESPELQS (183 aa). The stretch at 51-58 is one 1; inverted repeat; it reads GAVAGSGA. Positions 51-110 are 7 X 8 AA tandem repeats of G-S-G-A-G-A-V-A; sequence GAVAGSGAGAGSGAGAVAGSGAGAVAGSGAGAVAGSGAGAVAGSGAGAVAGSGAVAGSGA. 5 tandem repeats follow at residues 61–68, 69–76, 77–84, 85–92, and 93–100. One copy of the 7; inverted repeat lies at 103–110; it reads GAVAGSGA. The segment at 111–261 is disordered; the sequence is GNGANPGADA…DSQKECTDGN (151 aa). Over residues 123 to 148 the composition is skewed to low complexity; the sequence is SPSTPATTTTTTTTNDAEASTSTSSE. A compositionally biased stretch (basic and acidic residues) spans 149–165; that stretch reads NRNHNNAETNPKGKGEV. Composition is skewed to polar residues over residues 167 to 193 and 200 to 228; these read KPNQ…NVPR and KSPT…QSAP. The N-linked (GlcNAc...) asparagine glycan is linked to Asn177. N-linked (GlcNAc...) asparagine glycosylation is present at Asn249. The cysteines at positions 257 and 265 are disulfide-linked. 2 N-linked (GlcNAc...) asparagine glycosylation sites follow: Asn273 and Asn274. Asn274 is lipidated: GPI-anchor amidated asparagine. A propeptide spans 275 to 300 (removed in mature form); it reads SSNIASINKFVVLISATLVLSFAIFI.

Its subcellular location is the cell membrane. Its function is as follows. May play a role in the merozoite attachment to the erythrocyte. The sequence is that of Merozoite surface protein 2 from Plasmodium falciparum (isolate imr143).